A 664-amino-acid polypeptide reads, in one-letter code: Intraflagellar transport protein 70A (664 aa).

TPR repeat units follow at residues 11 to 44 (DGEFTAVVYRLIRDARYAEAVQLLGGELQRSPRS), 45 to 78 (RAGLSLLGYCYYRLQEFALAAECYEQLRQLHPEL), 153 to 186 (LDGQVNLGCLLYKEGHYEAACSKFSAALQASGYR), 188 to 220 (DLSYNLALAYFSSRQYASALKHIVEIIEHGIRQ), 392 to 423 (LTKQVQEARHNKDDEAIKKAENEYDDTLEKYI), 424 to 456 (PVLMAQAKIYWNLENYPMVEKIFRKSVEFCNDH), and 458 to 491 (VWKLNVAHVLFMQENKYKEAIGFYEPIVKKHYDN). The stretch at 507–534 (YIMTSQNEEAEELMRKIEKEEEQLSYDD) forms a coiled coil. One copy of the TPR 8 repeat lies at 543–576 (CIVNLVIGTLYCAKGNYDFGISRVIKSLEPYNKK).

It belongs to the TTC30/dfy-1/fleer family.

It is found in the cell projection. The protein resides in the cilium. Its function is as follows. Required for polyglutamylation of axonemal tubulin. Plays a role in anterograde intraflagellar transport (IFT), the process by which cilia precursors are transported from the base of the cilium to the site of their incorporation at the tip. This Bos taurus (Bovine) protein is Intraflagellar transport protein 70A (IFT70A).